The sequence spans 418 residues: Putative ion-transport protein YfeO (418 aa).

Helical transmembrane passes span 15-37 (PAVA…ASVL), 57-79 (LWII…FSQG), 99-118 (ALPR…VSLG), 149-171 (ILAS…LIFS), 186-208 (LFAP…HPHF), 221-243 (TDIL…AVWC), 258-280 (VLVL…PVSL), 301-323 (YFLL…FRGG), 343-363 (VPAV…VLVV), and 376-398 (VVVP…WLLL).

The protein belongs to the chloride channel (TC 2.A.49) family.

The protein resides in the cell membrane. The protein is Putative ion-transport protein YfeO (yfeO) of Shigella flexneri.